Reading from the N-terminus, the 861-residue chain is Bifunctional uridylyltransferase/uridylyl-removing enzyme (861 aa).

The interval 1-321 (MKNDNRIIKN…VYHQKQKIIR (321 aa)) is uridylyltransferase. Positions 322–678 (LDDEFQLSNR…IMPHHSQGGT (357 aa)) are uridylyl-removing. The HD domain maps to 440 to 562 (VDQHTLFVIR…LPHARYLDYL (123 aa)). ACT domains lie at 679 to 760 (EVFI…AVSR) and 788 to 861 (QLFL…KSKY).

Belongs to the GlnD family. Mg(2+) serves as cofactor.

It carries out the reaction [protein-PII]-L-tyrosine + UTP = [protein-PII]-uridylyl-L-tyrosine + diphosphate. The enzyme catalyses [protein-PII]-uridylyl-L-tyrosine + H2O = [protein-PII]-L-tyrosine + UMP + H(+). With respect to regulation, uridylyltransferase (UTase) activity is inhibited by glutamine, while glutamine activates uridylyl-removing (UR) activity. Its function is as follows. Modifies, by uridylylation and deuridylylation, the PII regulatory proteins (GlnB and homologs), in response to the nitrogen status of the cell that GlnD senses through the glutamine level. Under low glutamine levels, catalyzes the conversion of the PII proteins and UTP to PII-UMP and PPi, while under higher glutamine levels, GlnD hydrolyzes PII-UMP to PII and UMP (deuridylylation). Thus, controls uridylylation state and activity of the PII proteins, and plays an important role in the regulation of nitrogen assimilation and metabolism. The chain is Bifunctional uridylyltransferase/uridylyl-removing enzyme from Legionella pneumophila (strain Paris).